A 512-amino-acid chain; its full sequence is tRNA-2-methylthio-N(6)-dimethylallyladenosine synthase (512 aa).

The segment at 1-20 (MLQQADGVSPDRSSCDTPAP) is disordered. Positions 21 to 137 (RTFEVRTYGC…LPTLLDRARH (117 aa)) constitute an MTTase N-terminal domain. 6 residues coordinate [4Fe-4S] cluster: Cys-30, Cys-66, Cys-100, Cys-174, Cys-178, and Cys-181. One can recognise a Radical SAM core domain in the interval 160-397 (RESAYAAWVS…ELQERISWEE (238 aa)). Residues 399 to 469 (RAQIGREVEL…PHHLIADAGP (71 aa)) form the TRAM domain. A compositionally biased stretch (basic and acidic residues) spans 470–486 (AEHRRTRAGDAHAEGRT). The segment at 470 to 512 (AEHRRTRAGDAHAEGRTPKTGVGLGMPGIGAPEPAPVTQGCAL) is disordered.

The protein belongs to the methylthiotransferase family. MiaB subfamily. In terms of assembly, monomer. Requires [4Fe-4S] cluster as cofactor.

The protein resides in the cytoplasm. The catalysed reaction is N(6)-dimethylallyladenosine(37) in tRNA + (sulfur carrier)-SH + AH2 + 2 S-adenosyl-L-methionine = 2-methylsulfanyl-N(6)-dimethylallyladenosine(37) in tRNA + (sulfur carrier)-H + 5'-deoxyadenosine + L-methionine + A + S-adenosyl-L-homocysteine + 2 H(+). In terms of biological role, catalyzes the methylthiolation of N6-(dimethylallyl)adenosine (i(6)A), leading to the formation of 2-methylthio-N6-(dimethylallyl)adenosine (ms(2)i(6)A) at position 37 in tRNAs that read codons beginning with uridine. This is tRNA-2-methylthio-N(6)-dimethylallyladenosine synthase from Mycolicibacterium gilvum (strain PYR-GCK) (Mycobacterium gilvum (strain PYR-GCK)).